Here is a 1261-residue protein sequence, read N- to C-terminus: ABC-type transmembrane transporter verA (1261 aa).

Residues 41–61 (IGCAFAAVCSGAAMPLMALIL) form a helical membrane-spanning segment. Residues 41 to 334 (IGCAFAAVCS…LGPNMPSFIK (294 aa)) form the ABC transmembrane type-1 1 domain. N-linked (GlcNAc...) asparagine glycosylation occurs at N67. 5 consecutive transmembrane segments (helical) span residues 92–112 (LWFV…SFGF), 166–186 (LGIM…AFSQ), 190–210 (LTLV…FIVS), 270–290 (FVGL…AIGF), and 308–328 (ILSV…LGPN). An ABC transporter 1 domain is found at 374–618 (VELRDMSFAY…GGLYKRLYDA (245 aa)). Residue N396 is glycosylated (N-linked (GlcNAc...) asparagine). ATP is bound at residue 409 to 416 (GPSGAGKS). Residue N463 is glycosylated (N-linked (GlcNAc...) asparagine). The next 6 membrane-spanning stretches (helical) occupy residues 686-706 (YWPI…IFPV), 734-754 (LMFF…GFFM), 808-828 (MGLL…GLAY), 830-850 (WKFA…AGYL), 913-933 (VMTL…ALGF), and 950-970 (FFTV…LFGF). The ABC transmembrane type-1 2 domain occupies 691–976 (LIGLVACVVT…LFGFSSNLGK (286 aa)). N-linked (GlcNAc...) asparagine glycans are attached at residues N1007 and N1021. Residues 1017–1255 (VDMQNVTFAY…QGNYFKMHES (239 aa)) form the ABC transporter 2 domain. An ATP-binding site is contributed by 1052 to 1059 (GTSGSGKS). N-linked (GlcNAc...) asparagine glycosylation is present at N1106.

This sequence belongs to the ABC transporter superfamily. ABCB family. Multidrug resistance exporter (TC 3.A.1.201) subfamily.

It localises to the cell membrane. Functionally, ABC-type transmembrane transporter; part of the gene cluster that mediates the biosynthesis of 11'-deoxyverticillin A, one of the dimeric epipolythiodioxopiperazines (ETPs) from the verticillin family that are toxic secondary metabolites. The verA multidrug transporter is probably involved in the secretion of 11'-deoxyverticillin A. The sequence is that of ABC-type transmembrane transporter verA from Clonostachys rogersoniana.